Consider the following 511-residue polypeptide: Potassium voltage-gated channel subfamily A member 10 (511 aa).

The disordered stretch occupies residues 25-44; the sequence is EPGYATDFDPTSSKGRPGSS. A helical transmembrane segment spans residues 218–238; the sequence is VAVVSVLVVVISITIFCLETL. Residues 271–292 form a helical membrane-spanning segment; the sequence is FFMVESTCIVWFTFELVLRFVV. Cysteine 293 carries S-palmitoyl cysteine lipidation. A helical transmembrane segment spans residues 303–323; the sequence is IMNIIDIISIIPYFATLITEL. The helical; Voltage-sensor transmembrane segment at 339–358 threads the bilayer; it reads ILRIIRLVRVFRIFKLSRHS. Residues 375–395 traverse the membrane as a helical segment; the sequence is LGLLIFFLFIGVILFSSAVYF. The Selectivity filter signature appears at 421 to 426; the sequence is TVGYGD. A helical transmembrane segment spans residues 436 to 456; it reads IVGTLCAIAGVLTIALPVPVI. A disordered region spans residues 489–511; the sequence is SRMGSTESLNKTNGSCSAEKSRK.

It belongs to the potassium channel family. A (Shaker) (TC 1.A.1.2) subfamily. Kv1.8/KCNA10 sub-subfamily. As to quaternary structure, homotetramer. Interacts with KCN4B/POMP. Interaction with KCN4B/POMP is necessary for the modulation of channel activity by cAMP. As to expression, expressed strongly in the inner ear and weakly in skeletal muscle. Not detected in other tissues.

The protein resides in the membrane. The catalysed reaction is K(+)(in) = K(+)(out). With respect to regulation, the channel activity is up-regulated by cAMP. Voltage-gated potassium ion channel that mediates K(+) permeability of excitable membranes. When opened in response to the voltage difference across the membrane, KCNA10 channel selectively allows the flow of potassium ions across the membrane down their electrochemical gradient. The sequence is that of Potassium voltage-gated channel subfamily A member 10 from Mus musculus (Mouse).